A 338-amino-acid polypeptide reads, in one-letter code: Aspartate carbamoyltransferase catalytic subunit (338 aa).

Carbamoyl phosphate contacts are provided by R71 and T72. Residue K99 participates in L-aspartate binding. Positions 121, 151, and 154 each coordinate carbamoyl phosphate. Residues R184 and R239 each coordinate L-aspartate. Residues G280 and P281 each contribute to the carbamoyl phosphate site.

It belongs to the aspartate/ornithine carbamoyltransferase superfamily. ATCase family. In terms of assembly, heterododecamer (2C3:3R2) of six catalytic PyrB chains organized as two trimers (C3), and six regulatory PyrI chains organized as three dimers (R2).

The catalysed reaction is carbamoyl phosphate + L-aspartate = N-carbamoyl-L-aspartate + phosphate + H(+). It functions in the pathway pyrimidine metabolism; UMP biosynthesis via de novo pathway; (S)-dihydroorotate from bicarbonate: step 2/3. Functionally, catalyzes the condensation of carbamoyl phosphate and aspartate to form carbamoyl aspartate and inorganic phosphate, the committed step in the de novo pyrimidine nucleotide biosynthesis pathway. This Stutzerimonas stutzeri (strain A1501) (Pseudomonas stutzeri) protein is Aspartate carbamoyltransferase catalytic subunit.